A 175-amino-acid chain; its full sequence is uncharacterized protein (175 aa).

Belongs to the asfivirus B175L family.

This is an uncharacterized protein from Ornithodoros (relapsing fever ticks).